We begin with the raw amino-acid sequence, 229 residues long: MGVRMWLPFPMLLLSALPATLLSGAAGFTPSLDSDFTFTLPAGQKECFYQPMPLKASLEIEYQVLDGGELDIDFHLASPEGRTLVFEQRKSDGVHTVETEDGDYMFCFDNTFSTISEKVIFFELILDNMGEEVEGQEDWKKYITNTDVLEMKLEDILESINSIKSRLSKSGHIQTLLRAFEARDRNIQESNFDRVNFWSVVNLMVMVVVSAIQVYTLKSLFEDKRKSRT.

An N-terminal signal peptide occupies residues 1–27 (MGVRMWLPFPMLLLSALPATLLSGAAG). Over 28-196 (FTPSLDSDFT…IQESNFDRVN (169 aa)) the chain is Lumenal. Positions 45–126 (KECFYQPMPL…EKVIFFELIL (82 aa)) constitute a GOLD domain. Residues 197–217 (FWSVVNLMVMVVVSAIQVYTL) form a helical membrane-spanning segment. The Cytoplasmic portion of the chain corresponds to 218 to 229 (KSLFEDKRKSRT).

This sequence belongs to the EMP24/GP25L family. As to quaternary structure, interacts with TMED9 and TMED10.

Its subcellular location is the endoplasmic reticulum membrane. The protein localises to the golgi apparatus. The protein resides in the cis-Golgi network membrane. It is found in the endoplasmic reticulum-Golgi intermediate compartment membrane. Functionally, potential role in vesicular protein trafficking, mainly in the early secretory pathway. Required for the maintenance of the Golgi apparatus; involved in protein exchange between Golgi stacks during assembly. Probably not required for COPI-vesicle-mediated retrograde transport. In Rattus norvegicus (Rat), this protein is Transmembrane emp24 domain-containing protein 5 (Tmed5).